Consider the following 443-residue polypeptide: Methyl-coenzyme M reductase I subunit beta (443 aa).

Position 367 (Y367) interacts with coenzyme M. G369 is a binding site for coenzyme B.

This sequence belongs to the methyl-coenzyme M reductase beta subunit family. MCR is a hexamer of two alpha, two beta, and two gamma chains, forming a dimer of heterotrimers. The cofactor is coenzyme F430.

Its subcellular location is the cytoplasm. It carries out the reaction coenzyme B + methyl-coenzyme M = methane + coenzyme M-coenzyme B heterodisulfide. The protein operates within one-carbon metabolism; methyl-coenzyme M reduction; methane from methyl-coenzyme M: step 1/1. Its function is as follows. Component of the methyl-coenzyme M reductase (MCR) I that catalyzes the reductive cleavage of methyl-coenzyme M (CoM-S-CH3 or 2-(methylthio)ethanesulfonate) using coenzyme B (CoB or 7-mercaptoheptanoylthreonine phosphate) as reductant which results in the production of methane and the mixed heterodisulfide of CoB and CoM (CoM-S-S-CoB). This is the final step in methanogenesis. The sequence is that of Methyl-coenzyme M reductase I subunit beta (mcrB) from Methanothermobacter thermautotrophicus (strain ATCC 29096 / DSM 1053 / JCM 10044 / NBRC 100330 / Delta H) (Methanobacterium thermoautotrophicum).